A 245-amino-acid chain; its full sequence is MNRYRLTVEFDGRNFMGWQRQKHGATIQGSIEEAGASIAGQPTPVQAAGRTDAGVHGLAMTAHIDVARDFTPFRLMEALNARLKPRPIAILSCEQVDPEWHARFSCIGRRYLYRIINRRPPLTLEAGRAWHVIKPLDAETMDIAAKRLIGLHDFTTFRSVHCQSKSPVKTLDHLDVRRIGDQIEITAAARSFLHHQVRSMVGCLVLVGQGQWTADDMTTALEARNRAALGFNAPPDGLYFTQAIY.

The Nucleophile role is filled by D52. Y111 lines the substrate pocket.

Belongs to the tRNA pseudouridine synthase TruA family. In terms of assembly, homodimer.

It catalyses the reaction uridine(38/39/40) in tRNA = pseudouridine(38/39/40) in tRNA. Functionally, formation of pseudouridine at positions 38, 39 and 40 in the anticodon stem and loop of transfer RNAs. The sequence is that of tRNA pseudouridine synthase A from Zymomonas mobilis subsp. mobilis (strain ATCC 31821 / ZM4 / CP4).